The chain runs to 517 residues: Probable G-protein coupled receptor Mth-like 4 (517 aa).

Positions 1-18 (MRILLIAVLFLLMPKSNA) are cleaved as a signal peptide. Residues 19-212 (EIPGCDFFDT…LSSEHSRTWK (194 aa)) are Extracellular-facing. 5 disulfides stabilise this stretch: Cys-23–Cys-77, Cys-79–Cys-84, Cys-88–Cys-183, Cys-89–Cys-100, and Cys-145–Cys-201. N-linked (GlcNAc...) asparagine glycosylation occurs at Asn-39. Asn-117 and Asn-165 each carry an N-linked (GlcNAc...) asparagine glycan. Residues 213 to 233 (TVAIVISLICIILTISVYLYV) form a helical membrane-spanning segment. The Cytoplasmic segment spans residues 234 to 242 (EKLRNLHGK). A helical membrane pass occupies residues 243-263 (CFICYLASLFLGYFFLVLNVW). Residues 264 to 272 (KYSSGFCVT) are Extracellular-facing. A helical membrane pass occupies residues 273–293 (AGFLGYFSVMAAFFWLSVIGI). Residues 294–319 (HLRIKFSLASNCLHRLLPENPFRAYN) lie on the Cytoplasmic side of the membrane. A helical membrane pass occupies residues 320–340 (LYAWGIPLIMTAITYTADQVV). The Extracellular segment spans residues 341-363 (KNEKLRPRVGVGKNCWIYTGDMT). The helical transmembrane segment at 364 to 384 (VMIYFYGPMLLLIAFNIIMFV) threads the bilayer. The Cytoplasmic segment spans residues 385–414 (LSAIYIYNIKKNVKGLVHKQQTNQQINDQQ). The chain crosses the membrane as a helical span at residues 415–435 (MFAIFLRLFILMGLSWSFEIL). Topologically, residues 436 to 459 (SFLLTKQQAWARALMVADYFNWSQ) are extracellular. Asn-456 carries an N-linked (GlcNAc...) asparagine glycan. The helical transmembrane segment at 460–480 (GTIIFVLFILKPSILKLIIAG) threads the bilayer. Residues 481 to 517 (GRQNLPGSHHNSRSKAARYNSTHTACEGSIADPNAYC) are Cytoplasmic-facing.

Belongs to the G-protein coupled receptor 2 family. Mth subfamily.

The protein localises to the cell membrane. The sequence is that of Probable G-protein coupled receptor Mth-like 4 (mthl4) from Drosophila melanogaster (Fruit fly).